We begin with the raw amino-acid sequence, 204 residues long: Guanylate kinase (204 aa).

In terms of domain architecture, Guanylate kinase-like spans 18–196 (PKLFTISAPA…SYEILKSIFI (179 aa)). 25-32 (APAGAGKT) contacts ATP.

It belongs to the guanylate kinase family.

Its subcellular location is the cytoplasm. The catalysed reaction is GMP + ATP = GDP + ADP. Functionally, essential for recycling GMP and indirectly, cGMP. The protein is Guanylate kinase of Chlamydia felis (strain Fe/C-56) (Chlamydophila felis).